Consider the following 298-residue polypeptide: GTPase Era (298 aa).

The 168-residue stretch at 4 to 171 (KSGFVSIVGR…VEGIFELLPE (168 aa)) folds into the Era-type G domain. The tract at residues 12-19 (GRPNVGKS) is G1. Residue 12 to 19 (GRPNVGKS) participates in GTP binding. The tract at residues 38 to 42 (QTTRN) is G2. The segment at 59 to 62 (DTPG) is G3. GTP-binding positions include 59-63 (DTPGV) and 121-124 (NKID). A G4 region spans residues 121 to 124 (NKID). Residues 150 to 152 (ISA) form a G5 region. In terms of domain architecture, KH type-2 spans 202-280 (TREEIPHSVA…YLDLWVKVKE (79 aa)).

The protein belongs to the TRAFAC class TrmE-Era-EngA-EngB-Septin-like GTPase superfamily. Era GTPase family. As to quaternary structure, monomer.

The protein resides in the cytoplasm. It is found in the cell membrane. In terms of biological role, an essential GTPase that binds both GDP and GTP, with rapid nucleotide exchange. Plays a role in 16S rRNA processing and 30S ribosomal subunit biogenesis and possibly also in cell cycle regulation and energy metabolism. The polypeptide is GTPase Era (Carboxydothermus hydrogenoformans (strain ATCC BAA-161 / DSM 6008 / Z-2901)).